We begin with the raw amino-acid sequence, 331 residues long: Ketol-acid reductoisomerase (NADP(+)) (331 aa).

In terms of domain architecture, KARI N-terminal Rossmann spans 2–182 (AQLFYDSDAD…GGTRAGILET (181 aa)). NADP(+) contacts are provided by residues 25–28 (YGSQ), Ser51, Ser53, and 83–86 (DEFQ). The active site involves His108. Residue Gly134 participates in NADP(+) binding. The KARI C-terminal knotted domain occupies 183–328 (NFKEETETDL…KGLRAMFSWL (146 aa)). Positions 191, 195, 227, and 231 each coordinate Mg(2+). Ser252 is a binding site for substrate.

Belongs to the ketol-acid reductoisomerase family. Requires Mg(2+) as cofactor.

The catalysed reaction is (2R)-2,3-dihydroxy-3-methylbutanoate + NADP(+) = (2S)-2-acetolactate + NADPH + H(+). It carries out the reaction (2R,3R)-2,3-dihydroxy-3-methylpentanoate + NADP(+) = (S)-2-ethyl-2-hydroxy-3-oxobutanoate + NADPH + H(+). It functions in the pathway amino-acid biosynthesis; L-isoleucine biosynthesis; L-isoleucine from 2-oxobutanoate: step 2/4. The protein operates within amino-acid biosynthesis; L-valine biosynthesis; L-valine from pyruvate: step 2/4. In terms of biological role, involved in the biosynthesis of branched-chain amino acids (BCAA). Catalyzes an alkyl-migration followed by a ketol-acid reduction of (S)-2-acetolactate (S2AL) to yield (R)-2,3-dihydroxy-isovalerate. In the isomerase reaction, S2AL is rearranged via a Mg-dependent methyl migration to produce 3-hydroxy-3-methyl-2-ketobutyrate (HMKB). In the reductase reaction, this 2-ketoacid undergoes a metal-dependent reduction by NADPH to yield (R)-2,3-dihydroxy-isovalerate. In Prochlorococcus marinus (strain MIT 9211), this protein is Ketol-acid reductoisomerase (NADP(+)).